The sequence spans 353 residues: Protein RecA (353 aa).

Residue 67–74 (GPESSGKT) participates in ATP binding.

This sequence belongs to the RecA family.

The protein localises to the cytoplasm. Can catalyze the hydrolysis of ATP in the presence of single-stranded DNA, the ATP-dependent uptake of single-stranded DNA by duplex DNA, and the ATP-dependent hybridization of homologous single-stranded DNAs. It interacts with LexA causing its activation and leading to its autocatalytic cleavage. The sequence is that of Protein RecA from Shewanella woodyi (strain ATCC 51908 / MS32).